A 367-amino-acid chain; its full sequence is Damage-control phosphatase At2g17340 (367 aa).

Met1 carries the N-acetylmethionine modification. Residues Asp220, Asn221, and Asp256 each contribute to the Mn(2+) site. Residues 318–322 (EGMGR) carry the Subfamily II EGMGR motif motif.

The protein belongs to the damage-control phosphatase family. Phosphopantetheine phosphatase II subfamily. Multimer. The cofactor is Mn(2+). Ni(2+) serves as cofactor.

Its activity is regulated as follows. Activity is strongly promoted by Co(2+), Ni(2+), Mg(2+), Cu(2+) and Mn(2+). Activity is inhibited by EDTA. Its function is as follows. Metal-dependent phosphatase with probable damage-control functions. Shows phosphatase activity against several substrates, including sugar phosphates and p-nitrophenyl phosphate(pNPP). Prefers sugar phosphate substrates, including the extremely potent glycating agents ribose-5-phosphate and erythrose-4-phosphate. The protein is Damage-control phosphatase At2g17340 of Arabidopsis thaliana (Mouse-ear cress).